Reading from the N-terminus, the 185-residue chain is MKIFGKWDPTEVEVRDLGIKRYVSLTPVIVPHSSGKHARQQFNKSEISIVERLANNLMRTEINTGKKQKTLRAVEEAFDIVSKKTKQNPIQVLVDAIANAGPREEVVRLKYGGISVPKAVDTAPQRRVDTALRYISMGTNNAAFKSKRSVAECLATELIGAANRDTKSFAINRKDAKERVAKAAR.

The protein belongs to the universal ribosomal protein uS7 family. Part of the 30S ribosomal subunit.

In terms of biological role, one of the primary rRNA binding proteins, it binds directly to 16S rRNA where it nucleates assembly of the head domain of the 30S subunit. Is located at the subunit interface close to the decoding center. This Methanosarcina barkeri (strain Fusaro / DSM 804) protein is Small ribosomal subunit protein uS7.